A 196-amino-acid polypeptide reads, in one-letter code: Molybdenum cofactor guanylyltransferase (196 aa).

Residues 10–12 (LAG), Lys23, Asn51, Asp69, and Asp99 each bind GTP. Asp99 provides a ligand contact to Mg(2+).

Belongs to the MobA family. Monomer. Requires Mg(2+) as cofactor.

The protein resides in the cytoplasm. The enzyme catalyses Mo-molybdopterin + GTP + H(+) = Mo-molybdopterin guanine dinucleotide + diphosphate. Transfers a GMP moiety from GTP to Mo-molybdopterin (Mo-MPT) cofactor (Moco or molybdenum cofactor) to form Mo-molybdopterin guanine dinucleotide (Mo-MGD) cofactor. In Shewanella baltica (strain OS155 / ATCC BAA-1091), this protein is Molybdenum cofactor guanylyltransferase.